Reading from the N-terminus, the 80-residue chain is Sulfur carrier protein TusA (80 aa).

The active-site Cysteine persulfide intermediate is Cys-17.

This sequence belongs to the sulfur carrier protein TusA family.

It is found in the cytoplasm. In terms of biological role, sulfur carrier protein which probably makes part of a sulfur-relay system. The polypeptide is Sulfur carrier protein TusA (Pseudomonas putida (strain GB-1)).